A 434-amino-acid polypeptide reads, in one-letter code: Enolase (434 aa).

The disordered stretch occupies residues 29–56 (SGHTGRAAVPSGASTGSREALEMRDGDK). A compositionally biased stretch (basic and acidic residues) spans 47–56 (EALEMRDGDK). Gln163 serves as a coordination point for (2R)-2-phosphoglycerate. Glu205 acts as the Proton donor in catalysis. Positions 242, 285, and 312 each coordinate Mg(2+). Residues Lys337, Arg366, Ser367, and Lys388 each coordinate (2R)-2-phosphoglycerate. Lys337 serves as the catalytic Proton acceptor.

The protein belongs to the enolase family. As to quaternary structure, homooctamer. Mg(2+) is required as a cofactor.

The protein resides in the cytoplasm. The protein localises to the secreted. It is found in the cell surface. It carries out the reaction (2R)-2-phosphoglycerate = phosphoenolpyruvate + H2O. Its pathway is carbohydrate degradation; glycolysis; pyruvate from D-glyceraldehyde 3-phosphate: step 4/5. Functionally, catalyzes the reversible conversion of 2-phosphoglycerate (2-PG) into phosphoenolpyruvate (PEP). It is essential for the degradation of carbohydrates via glycolysis. The sequence is that of Enolase from Nitratidesulfovibrio vulgaris (strain DSM 19637 / Miyazaki F) (Desulfovibrio vulgaris).